The following is a 417-amino-acid chain: MADIRNFTLNFGPQHPAAHGVLRLVLELDGEVVQRADPHIGLLHRATEKLAETRTWVQSVPYMDRLDYVSMMCNEHAYCLATEKLLGIEVPERGKYIRVMFDEVTRILNHLLWIGCHALDVGAMTMALYTFREREDLMDVYEAVSGARMHAAYYRPGGVYRDLPDRMPQYQESTWTNAKKAAEKNENRSGSVLDFLEDFTNRFPTYHSEYHTLLTDNRIWKQRLVNVGVVTPERALQMGFTGAMLRGSGIAWDLRKKQPYAAYDKINFDVPVGVNGDSYDRYLVRMEEMIQSNNIIKQCIAWLRKNPGPVITDNNKVAPPPRENMKTNMEELIHHFKLFTEGIHVPAGEAYAAVEHPKGEFGIYFVSDGANKPYRMKIRAPGFVHLAGLDEMSRGHMIADVVTIIGSQDIVFGEIDR.

Belongs to the complex I 49 kDa subunit family. As to quaternary structure, NDH-1 is composed of 14 different subunits. Subunits NuoB, C, D, E, F, and G constitute the peripheral sector of the complex.

The protein resides in the cell inner membrane. The enzyme catalyses a quinone + NADH + 5 H(+)(in) = a quinol + NAD(+) + 4 H(+)(out). In terms of biological role, NDH-1 shuttles electrons from NADH, via FMN and iron-sulfur (Fe-S) centers, to quinones in the respiratory chain. The immediate electron acceptor for the enzyme in this species is believed to be ubiquinone. Couples the redox reaction to proton translocation (for every two electrons transferred, four hydrogen ions are translocated across the cytoplasmic membrane), and thus conserves the redox energy in a proton gradient. This is NADH-quinone oxidoreductase subunit D from Dechloromonas aromatica (strain RCB).